The sequence spans 617 residues: UvrABC system protein C (617 aa).

The 79-residue stretch at 22 to 100 (NLPGVYRFFN…IKALSPKYNI (79 aa)) folds into the GIY-YIG domain. The UVR domain maps to 209-244 (DELTRTLQHKMQTAAANLQFEEAARYRDQIQALGIM).

The protein belongs to the UvrC family. As to quaternary structure, interacts with UvrB in an incision complex.

It is found in the cytoplasm. Functionally, the UvrABC repair system catalyzes the recognition and processing of DNA lesions. UvrC both incises the 5' and 3' sides of the lesion. The N-terminal half is responsible for the 3' incision and the C-terminal half is responsible for the 5' incision. The polypeptide is UvrABC system protein C (Neisseria meningitidis serogroup B (strain ATCC BAA-335 / MC58)).